The following is a 372-amino-acid chain: GTPase Obg (372 aa).

The 159-residue stretch at 1–159 (MKFIDEARIE…RMLKLELKVL (159 aa)) folds into the Obg domain. The tract at residues 128–147 (LHFKSSTNRAPRQKTDGKPG) is disordered. Positions 160–334 (ADVGLLGMPN…LVYAIYDYLA (175 aa)) constitute an OBG-type G domain. Residues 166 to 173 (GMPNAGKS), 191 to 195 (FTTLA), 213 to 216 (DIPG), 284 to 287 (NKLD), and 315 to 317 (SAL) each bind GTP. Serine 173 and threonine 193 together coordinate Mg(2+).

It belongs to the TRAFAC class OBG-HflX-like GTPase superfamily. OBG GTPase family. As to quaternary structure, monomer. It depends on Mg(2+) as a cofactor.

Its subcellular location is the cytoplasm. In terms of biological role, an essential GTPase which binds GTP, GDP and possibly (p)ppGpp with moderate affinity, with high nucleotide exchange rates and a fairly low GTP hydrolysis rate. Plays a role in control of the cell cycle, stress response, ribosome biogenesis and in those bacteria that undergo differentiation, in morphogenesis control. This Burkholderia thailandensis (strain ATCC 700388 / DSM 13276 / CCUG 48851 / CIP 106301 / E264) protein is GTPase Obg.